The chain runs to 464 residues: Siroheme synthase (464 aa).

The tract at residues 1–203 is precorrin-2 dehydrogenase /sirohydrochlorin ferrochelatase; sequence MKYLPLFHNL…GQGAEAERLL (203 aa). NAD(+)-binding positions include 22–23 and 43–44; these read EI and PE. A Phosphoserine modification is found at serine 128. The uroporphyrinogen-III C-methyltransferase stretch occupies residues 216–464; that stretch reads GEVYLVGAGP…AWFEGAQGQI (249 aa). An S-adenosyl-L-methionine-binding site is contributed by proline 225. The Proton acceptor role is filled by aspartate 248. The active-site Proton donor is lysine 270. S-adenosyl-L-methionine is bound by residues 301–303, isoleucine 306, 331–332, methionine 383, and glycine 412; these read GGD and TA.

It in the N-terminal section; belongs to the precorrin-2 dehydrogenase / sirohydrochlorin ferrochelatase family. In the C-terminal section; belongs to the precorrin methyltransferase family.

The catalysed reaction is uroporphyrinogen III + 2 S-adenosyl-L-methionine = precorrin-2 + 2 S-adenosyl-L-homocysteine + H(+). It carries out the reaction precorrin-2 + NAD(+) = sirohydrochlorin + NADH + 2 H(+). It catalyses the reaction siroheme + 2 H(+) = sirohydrochlorin + Fe(2+). The protein operates within cofactor biosynthesis; adenosylcobalamin biosynthesis; precorrin-2 from uroporphyrinogen III: step 1/1. Its pathway is cofactor biosynthesis; adenosylcobalamin biosynthesis; sirohydrochlorin from precorrin-2: step 1/1. It functions in the pathway porphyrin-containing compound metabolism; siroheme biosynthesis; precorrin-2 from uroporphyrinogen III: step 1/1. It participates in porphyrin-containing compound metabolism; siroheme biosynthesis; siroheme from sirohydrochlorin: step 1/1. The protein operates within porphyrin-containing compound metabolism; siroheme biosynthesis; sirohydrochlorin from precorrin-2: step 1/1. Its function is as follows. Multifunctional enzyme that catalyzes the SAM-dependent methylations of uroporphyrinogen III at position C-2 and C-7 to form precorrin-2 via precorrin-1. Then it catalyzes the NAD-dependent ring dehydrogenation of precorrin-2 to yield sirohydrochlorin. Finally, it catalyzes the ferrochelation of sirohydrochlorin to yield siroheme. This is Siroheme synthase from Pseudomonas fluorescens (strain Pf0-1).